A 173-amino-acid chain; its full sequence is Thiol-disulfide oxidoreductase ResA (173 aa).

The helical; Signal-anchor for type II membrane protein transmembrane segment at 10–29 threads the bilayer; that stretch reads VIILLILCGAVGFTLYQGFF. The Thioredoxin domain occupies 35 to 173; that stretch reads MQIGKEAPNF…LEGYLQKITP (139 aa). Cysteine 73 and cysteine 76 are oxidised to a cystine.

The protein belongs to the thioredoxin family. ResA subfamily.

It localises to the cell membrane. The protein operates within protein modification; cytochrome c assembly. Its function is as follows. Thiol-disulfide oxidoreductase which is required in disulfide reduction during c-type cytochrome synthesis. May accept reducing equivalents from CcdA, leading to breakage of disulfide bonds in apocytochrome c; following this reduction heme can be covalently attached. The chain is Thiol-disulfide oxidoreductase ResA from Bacillus cereus (strain ZK / E33L).